A 374-amino-acid polypeptide reads, in one-letter code: Queuine tRNA-ribosyltransferase (374 aa).

Asp-94 serves as the catalytic Proton acceptor. Substrate contacts are provided by residues 94-98 (DSGGF), Asp-148, Gln-191, and Gly-218. Residues 249-255 (GVGSPDY) are RNA binding. Asp-268 functions as the Nucleophile in the catalytic mechanism. An RNA binding; important for wobble base 34 recognition region spans residues 273-277 (TRIGR). Zn(2+)-binding residues include Cys-306, Cys-308, Cys-311, and His-337.

It belongs to the queuine tRNA-ribosyltransferase family. Homodimer. Within each dimer, one monomer is responsible for RNA recognition and catalysis, while the other monomer binds to the replacement base PreQ1. Zn(2+) is required as a cofactor.

It carries out the reaction 7-aminomethyl-7-carbaguanine + guanosine(34) in tRNA = 7-aminomethyl-7-carbaguanosine(34) in tRNA + guanine. Its pathway is tRNA modification; tRNA-queuosine biosynthesis. Catalyzes the base-exchange of a guanine (G) residue with the queuine precursor 7-aminomethyl-7-deazaguanine (PreQ1) at position 34 (anticodon wobble position) in tRNAs with GU(N) anticodons (tRNA-Asp, -Asn, -His and -Tyr). Catalysis occurs through a double-displacement mechanism. The nucleophile active site attacks the C1' of nucleotide 34 to detach the guanine base from the RNA, forming a covalent enzyme-RNA intermediate. The proton acceptor active site deprotonates the incoming PreQ1, allowing a nucleophilic attack on the C1' of the ribose to form the product. After dissociation, two additional enzymatic reactions on the tRNA convert PreQ1 to queuine (Q), resulting in the hypermodified nucleoside queuosine (7-(((4,5-cis-dihydroxy-2-cyclopenten-1-yl)amino)methyl)-7-deazaguanosine). The polypeptide is Queuine tRNA-ribosyltransferase (Acetivibrio thermocellus (strain ATCC 27405 / DSM 1237 / JCM 9322 / NBRC 103400 / NCIMB 10682 / NRRL B-4536 / VPI 7372) (Clostridium thermocellum)).